The chain runs to 435 residues: MNKLLIFIMLVTFLAIEKSFMSEVDNMKLEFVQTIWRHGDRSALEGLFPISEKNWTFGGGGLGELTPMGMSEMNNLGTIFRRRYVEDQQFLSHRYAAKEIYIRSTNLNRTIISAMSLLYGMFPPGAWNIQGVDYPNDVDWQQGFTFIPVHVDGIDQCAVAQLCNCRRFQELQEKWAELDEVKNATVAMIALNRRVAAFYNVTDQPEKFNRYTDAWKCQRNWFNDTMYQQLPWYNEDLYNEAQRTYAPFKRFTEGNFAKPSIVDGIDIPQEVSTLQGGPLLNEIFERGREKIRCVADAENCSIDYLKPLKFYAYSSHDQLVYALLVTLGITDVVKTVDGWPDTSSSLTIEYYSNPGNQSSVKFLYRDNSNDNFSDVTSQIPVCNGAQYCAMSDFQNIAYQFKPLPDYMTLCETSLSSISSVLNNKIWVFVIIYFLI.

Histidine 38 functions as the Nucleophile in the catalytic mechanism. The Proton donor role is filled by aspartate 317. A disulfide bridge links cysteine 382 with cysteine 388.

Belongs to the histidine acid phosphatase family.

It catalyses the reaction a phosphate monoester + H2O = an alcohol + phosphate. This Caenorhabditis elegans protein is Putative acid phosphatase F26C11.1.